Here is a 257-residue protein sequence, read N- to C-terminus: Nickel import system ATP-binding protein NikD (257 aa).

The region spanning 4-245 (IDIQNLTIKN…HLHPYTEQLI (242 aa)) is the ABC transporter domain. Residue 37–44 (GESGAGKS) participates in ATP binding.

The protein belongs to the ABC transporter superfamily. The complex is composed of two ATP-binding proteins (NikD and NikE), two transmembrane proteins (NikB and NikC) and a solute-binding protein (NikA).

The protein resides in the cell membrane. It catalyses the reaction Ni(2+)(out) + ATP + H2O = Ni(2+)(in) + ADP + phosphate + H(+). Part of the ABC transporter complex NikABCDE (Opp2) involved in nickel import. Probably responsible for energy coupling to the transport system. This Staphylococcus aureus (strain bovine RF122 / ET3-1) protein is Nickel import system ATP-binding protein NikD.